Reading from the N-terminus, the 1336-residue chain is Putative botulinum-like toxin Wo (1336 aa).

Residues 1–476 (MDVLEMFDVN…VAGMQRMVSL (476 aa)) are has protease activity. H250 provides a ligand contact to Zn(2+). E251 is an active-site residue. Zn(2+) is bound by residues H254 and E296.

This sequence belongs to the peptidase M27 family. The cofactor is Zn(2+).

It catalyses the reaction Limited hydrolysis of proteins of the neuroexocytosis apparatus, synaptobrevins, SNAP25 or syntaxin. No detected action on small molecule substrates.. Inhibited by EDTA and 1,10-phenanthroline. Functionally, when overexpressed the N-terminus (residues 1-476) cleaves rat synaptobrevin-2/VAMP2 between '89-Trp-|-Trp-90' in vitro. This releases the cytoplasmic domain of VAMP2 from the synaptic vesicle membrane, which would prevent the assembly of the trans-SNARE complex on the membrane and thus prevent vesicle-target membrane fusion and neurotransmitter release. The polypeptide is Putative botulinum-like toxin Wo (Weissella oryzae (strain DSM 25784 / JCM 18191 / LMG 30913 / SG25)).